The primary structure comprises 148 residues: Small ribosomal subunit protein uS9 (148 aa).

Belongs to the universal ribosomal protein uS9 family.

The chain is Small ribosomal subunit protein uS9 (RpS16) from Drosophila melanogaster (Fruit fly).